Reading from the N-terminus, the 461-residue chain is Elongation factor 1-alpha, oocyte form (461 aa).

N,N,N-trimethylglycine is present on G2. Residues 5 to 242 form the tr-type G domain; it reads KIHINIVVIG…DCIIPPQRPT (238 aa). The tract at residues 14 to 21 is G1; the sequence is GHVDSGKS. Residue 14 to 21 participates in GTP binding; the sequence is GHVDSGKS. The segment at 70–74 is G2; sequence GITID. The interval 91-94 is G3; that stretch reads DAPG. GTP contacts are provided by residues 91–95 and 153–156; these read DAPGH and NKMD. The interval 153–156 is G4; the sequence is NKMD. Positions 194-196 are G5; it reads SGW. E301 and E374 each carry 5-glutamyl glycerylphosphorylethanolamine.

Belongs to the TRAFAC class translation factor GTPase superfamily. Classic translation factor GTPase family. EF-Tu/EF-1A subfamily. As to expression, oocyte.

It is found in the cytoplasm. In terms of biological role, this protein promotes the GTP-dependent binding of aminoacyl-tRNA to the A-site of ribosomes during protein biosynthesis. The chain is Elongation factor 1-alpha, oocyte form (eef1ao) from Xenopus laevis (African clawed frog).